The following is a 778-amino-acid chain: ATP synthase subunit beta (778 aa).

The unknown stretch occupies residues 1–289 (MKENNKTIEA…IDIYEENEDL (289 aa)). Residues 290 to 778 (MKLNTLKSDK…KPLNSENKSN (489 aa)) are ATP synthase subunit beta. 447-454 (GGAGVGKT) provides a ligand contact to ATP.

It belongs to the ATPase alpha/beta chains family. F-type ATPases have 2 components, CF(1) - the catalytic core - and CF(0) - the membrane proton channel. CF(1) has five subunits: alpha(3), beta(3), gamma(1), delta(1), epsilon(1). CF(0) has three main subunits: a(1), b(2) and c(9-12). The alpha and beta chains form an alternating ring which encloses part of the gamma chain. CF(1) is attached to CF(0) by a central stalk formed by the gamma and epsilon chains, while a peripheral stalk is formed by the delta and b chains.

The protein localises to the cell membrane. It catalyses the reaction ATP + H2O + 4 H(+)(in) = ADP + phosphate + 5 H(+)(out). In terms of biological role, produces ATP from ADP in the presence of a proton gradient across the membrane. The catalytic sites are hosted primarily by the beta subunits. The sequence is that of ATP synthase subunit beta (atpD) from Malacoplasma penetrans (strain HF-2) (Mycoplasma penetrans).